A 536-amino-acid chain; its full sequence is Inactive phospholipase D5 (536 aa).

Residues 69–89 (IVIFALVCCFAILVALIFSAV) traverse the membrane as a helical segment. N-linked (GlcNAc...) asparagine glycosylation occurs at Asn-121. The PLD phosphodiesterase 1 domain maps to 215-242 (NKGRLQSSFWIVDKQHVYIGSAGLDWQS). An N-linked (GlcNAc...) asparagine glycan is attached at Asn-302. The 27-residue stretch at 434-460 (FPRLNRNKYMVTDGAAYIGNFDWVGND) folds into the PLD phosphodiesterase 2 domain.

It belongs to the phospholipase D family.

It localises to the membrane. The polypeptide is Inactive phospholipase D5 (PLD5) (Homo sapiens (Human)).